Consider the following 553-residue polypeptide: CTP synthase (553 aa).

Residues 1 to 270 are amidoligase domain; sequence MTKYVFVTGG…DRLICEELRL (270 aa). Residue S13 coordinates CTP. S13 provides a ligand contact to UTP. ATP-binding positions include 14-19 and D71; that span reads SLGKGI. Residues D71 and E144 each contribute to the Mg(2+) site. CTP is bound by residues 151 to 153, 191 to 196, and K227; these read DIE and KTKPTQ. Residues 191–196 and K227 contribute to the UTP site; that span reads KTKPTQ. Positions 295 to 547 constitute a Glutamine amidotransferase type-1 domain; sequence TIGMVGKYVD…VQAALACQQT (253 aa). L-glutamine is bound at residue G356. C383 (nucleophile; for glutamine hydrolysis) is an active-site residue. Residues 384–387, E407, and R473 contribute to the L-glutamine site; that span reads LGMQ. Active-site residues include H520 and E522.

This sequence belongs to the CTP synthase family. As to quaternary structure, homotetramer.

It catalyses the reaction UTP + L-glutamine + ATP + H2O = CTP + L-glutamate + ADP + phosphate + 2 H(+). The enzyme catalyses L-glutamine + H2O = L-glutamate + NH4(+). It carries out the reaction UTP + NH4(+) + ATP = CTP + ADP + phosphate + 2 H(+). The protein operates within pyrimidine metabolism; CTP biosynthesis via de novo pathway; CTP from UDP: step 2/2. With respect to regulation, allosterically activated by GTP, when glutamine is the substrate; GTP has no effect on the reaction when ammonia is the substrate. The allosteric effector GTP functions by stabilizing the protein conformation that binds the tetrahedral intermediate(s) formed during glutamine hydrolysis. Inhibited by the product CTP, via allosteric rather than competitive inhibition. Catalyzes the ATP-dependent amination of UTP to CTP with either L-glutamine or ammonia as the source of nitrogen. Regulates intracellular CTP levels through interactions with the four ribonucleotide triphosphates. This chain is CTP synthase, found in Burkholderia mallei (strain NCTC 10247).